The chain runs to 185 residues: Large ribosomal subunit protein uL5 (185 aa).

The protein belongs to the universal ribosomal protein uL5 family. In terms of assembly, part of the 50S ribosomal subunit; part of the 5S rRNA/L5/L18/L25 subcomplex. Contacts the 5S rRNA and the P site tRNA. Forms a bridge to the 30S subunit in the 70S ribosome.

In terms of biological role, this is one of the proteins that bind and probably mediate the attachment of the 5S RNA into the large ribosomal subunit, where it forms part of the central protuberance. In the 70S ribosome it contacts protein S13 of the 30S subunit (bridge B1b), connecting the 2 subunits; this bridge is implicated in subunit movement. Contacts the P site tRNA; the 5S rRNA and some of its associated proteins might help stabilize positioning of ribosome-bound tRNAs. The sequence is that of Large ribosomal subunit protein uL5 from Bartonella henselae (strain ATCC 49882 / DSM 28221 / CCUG 30454 / Houston 1) (Rochalimaea henselae).